Here is a 385-residue protein sequence, read N- to C-terminus: cAMP-dependent protein kinase regulatory subunit (385 aa).

A compositionally biased stretch (polar residues) spans 1–22 (MSSTGFTSPFGNANPFGSSGRS). 2 disordered regions span residues 1–51 (MSST…GVKN) and 77–111 (DFPA…PVHP). A dimerization and phosphorylation region spans residues 1 to 128 (MSSTGFTSPF…RLKKAISGNF (128 aa)). Phosphoserine is present on Ser89. 3',5'-cyclic AMP-binding positions include 129-260 (LFNH…EEVP), Glu207, Arg216, 261-378 (ILKT…EAEE), Glu328, and Arg337.

The protein belongs to the cAMP-dependent kinase regulatory chain family. In terms of assembly, tetramer, composed of 2 regulatory (R) and 2 catalytic (C) subunits. In the presence of cAMP it dissociates into 2 active monomeric C subunits and an R dimer.

The protein is cAMP-dependent protein kinase regulatory subunit (mcb) of Neurospora crassa (strain ATCC 24698 / 74-OR23-1A / CBS 708.71 / DSM 1257 / FGSC 987).